A 277-amino-acid chain; its full sequence is NH(3)-dependent NAD(+) synthetase (277 aa).

36–43 (GLSGGIDS) is a binding site for ATP. D42 is a Mg(2+) binding site. R118 serves as a coordination point for deamido-NAD(+). T138 is a binding site for ATP. Mg(2+) is bound at residue E143. ATP is bound by residues K167 and S189.

It belongs to the NAD synthetase family. In terms of assembly, homodimer.

It carries out the reaction deamido-NAD(+) + NH4(+) + ATP = AMP + diphosphate + NAD(+) + H(+). Its pathway is cofactor biosynthesis; NAD(+) biosynthesis; NAD(+) from deamido-NAD(+) (ammonia route): step 1/1. Its function is as follows. Catalyzes the ATP-dependent amidation of deamido-NAD to form NAD. Uses ammonia as a nitrogen source. In Chlorobaculum parvum (strain DSM 263 / NCIMB 8327) (Chlorobium vibrioforme subsp. thiosulfatophilum), this protein is NH(3)-dependent NAD(+) synthetase.